The chain runs to 223 residues: Rho-related protein racE (223 aa).

GTP is bound at residue Gly18 to Thr25. The Effector region signature appears at Tyr40 to Tyr48. Residues Asp65–Gln69 and Thr123–Asp126 each bind GTP. The interval Gly187–Leu223 is disordered. A compositionally biased stretch (basic residues) spans Lys210 to Leu223. Cys220 carries the cysteine methyl ester modification. Cys220 carries the S-geranylgeranyl cysteine lipid modification. The propeptide at Ile221 to Leu223 is removed in mature form.

It belongs to the small GTPase superfamily. Rho family. As to quaternary structure, interacts with rgaA.

It is found in the cell membrane. Specifically required for cytokinesis. The sequence is that of Rho-related protein racE (racE) from Dictyostelium discoideum (Social amoeba).